A 72-amino-acid polypeptide reads, in one-letter code: Conotoxin 3 (72 aa).

The first 22 residues, 1–22, serve as a signal peptide directing secretion; the sequence is MKLTCVVIVAVLLLTACQLITA. Positions 23 to 46 are excised as a propeptide; sequence DDSRGTQEHRALRSDTKLSMLTLR. Disulfide bonds link Cys-47-Cys-61, Cys-54-Cys-64, and Cys-60-Cys-71.

This sequence belongs to the conotoxin O1 superfamily. As to expression, expressed by the venom duct.

Its subcellular location is the secreted. The chain is Conotoxin 3 from Conus striatus (Striated cone).